The following is a 690-amino-acid chain: Glycine--tRNA ligase beta subunit (690 aa).

It belongs to the class-II aminoacyl-tRNA synthetase family. As to quaternary structure, tetramer of two alpha and two beta subunits.

It localises to the cytoplasm. The enzyme catalyses tRNA(Gly) + glycine + ATP = glycyl-tRNA(Gly) + AMP + diphosphate. In Desulfitobacterium hafniense (strain Y51), this protein is Glycine--tRNA ligase beta subunit.